A 122-amino-acid chain; its full sequence is Large ribosomal subunit protein bL12 (122 aa).

Belongs to the bacterial ribosomal protein bL12 family. Homodimer. Part of the ribosomal stalk of the 50S ribosomal subunit. Forms a multimeric L10(L12)X complex, where L10 forms an elongated spine to which 2 to 4 L12 dimers bind in a sequential fashion. Binds GTP-bound translation factors.

In terms of biological role, forms part of the ribosomal stalk which helps the ribosome interact with GTP-bound translation factors. Is thus essential for accurate translation. In Cronobacter sakazakii (strain ATCC BAA-894) (Enterobacter sakazakii), this protein is Large ribosomal subunit protein bL12.